An 847-amino-acid chain; its full sequence is MEPWKQCAQWLIHSKVLPPNHRVTWDSAQVFDLAQTLRDGVLLCQLLNNLRPHSINLKEINLRPQMSQFLCLKNIRTFLAACCDTFGMRKSELFEAFDLFDVRDFGKVIETLSRLSRTPIALATGIRPFPTEESINDEDIYKGLPDLIDETRVEDEEDLYDCVYGEDEGGEVYEDLMKAEEAQQPKSQENDIRSCCLAEIRQTEEKYTETLESIEKYFMAPLKRFLTAAEFDSVFINIPDLVKVHRSLMQEIHDSIVNKDDQNLYQVFINYKERLVIYGQYCSGVESAISNLDYISKTKEDVKLKLEECSKRANNGKFTLRDLLVVPMQRVLKYHLLLQELVKHTHDPMEKANLKLALDAMKDLAQYVNEVKRDNETLREIKQFQLSIENLNQPVLLFGRPQGDGEIRITTLDKHTKQERHIFLFDLAVIVCKRKGDNYEMKEIIDLQQYKIANNPTTDKENKKWSYGFYLIHTQGQNGLEFYCKTKDLKKKWLEQFEMALSNIRPDYADSNFHDFKMHTFTRVTSCRVCQMLLRGTFYQGYLCFKCGAKAHKECLGRVDNCGRVNSVEQGPFKPPEKRTNGLRRASRQVDPGLPKMQVIRNYTGTPAPGLHEGPPLHIQAGDTVELLRGDAHSVFWQGRNLASGEVGFFPSDAVKPSPCVPKPVDYSCQPWYAGPMERLQAETELINRVNSTYLVRHRTKESGEYAISIKYNNEAKHIKILTRDGFFHIAENRKFKSLMELVEYYKHHSLKEGFRTLDTTLQFPYKEPEQPAGQRGNRTGNSLLSPKVLGIAIARYDFCARDMRELSLLKGDMVKIYTKMSANGWWRGEVNGRVGWFPSTYVEEDE.

In terms of domain architecture, Calponin-homology (CH) spans 1-119; sequence MEPWKQCAQW…ETLSRLSRTP (119 aa). Y141 is modified (phosphotyrosine). The DH domain maps to 192-371; sequence IRSCCLAEIR…KDLAQYVNEV (180 aa). The region spanning 400–502 is the PH domain; it reads RPQGDGEIRI…WLEQFEMALS (103 aa). The Phorbol-ester/DAG-type zinc-finger motif lies at 513-562; that stretch reads FHDFKMHTFTRVTSCRVCQMLLRGTFYQGYLCFKCGAKAHKECLGRVDNC. The segment at 560 to 847 is sufficient for interaction with ROS1; the sequence is DNCGRVNSVE…FPSTYVEEDE (288 aa). One can recognise an SH3 1 domain in the interval 592-660; the sequence is PGLPKMQVIR…PSDAVKPSPC (69 aa). Positions 672-766 constitute an SH2 domain; the sequence is WYAGPMERLQ…TLDTTLQFPY (95 aa). The region spanning 788-847 is the SH3 2 domain; it reads KVLGIAIARYDFCARDMRELSLLKGDMVKIYTKMSANGWWRGEVNGRVGWFPSTYVEEDE.

As to quaternary structure, interacts with the PH domain of APS. Interacts with ROS1; constitutive interaction that mediates VAV3 phosphorylation. Interacts (via SH2 domains) with the phosphorylated form of EPHA2. Phosphorylated. Phosphorylation can be mediated by ROS1. In osteoclasts, undergoes tyrosine phosphorylation in response to CSF1. In terms of tissue distribution, abundantly expressed in osteoclasts and mature osteoblasts. Also expressed in bone marrow macrophages (at protein level):.

Functionally, exchange factor for GTP-binding proteins RhoA, RhoG and, to a lesser extent, Rac1. Binds physically to the nucleotide-free states of those GTPases. Plays an important role in angiogenesis. Its recruitment by phosphorylated EPHA2 is critical for EFNA1-induced RAC1 GTPase activation and vascular endothelial cell migration and assembly. May be important for integrin-mediated signaling, at least in some cell types. In osteoclasts, along with SYK tyrosine kinase, required for signaling through integrin alpha-v/beta-1 (ITAGV-ITGB1), a crucial event for osteoclast proper cytoskeleton organization and function. This signaling pathway involves RAC1, but not RHO, activation. Necessary for proper wound healing. In the course of wound healing, required for the phagocytotic cup formation preceding macrophage phagocytosis of apoptotic neutrophils. Responsible for integrin beta-2-mediated macrophage adhesion and, to a lesser extent, contributes to beta-3-mediated adhesion. Does not affect integrin beta-1-mediated adhesion. This chain is Guanine nucleotide exchange factor VAV3 (Vav3), found in Mus musculus (Mouse).